Consider the following 331-residue polypeptide: 6-phosphogluconolactonase (331 aa).

This sequence belongs to the cycloisomerase 2 family.

The enzyme catalyses 6-phospho-D-glucono-1,5-lactone + H2O = 6-phospho-D-gluconate + H(+). The protein operates within carbohydrate degradation; pentose phosphate pathway; D-ribulose 5-phosphate from D-glucose 6-phosphate (oxidative stage): step 2/3. Functionally, catalyzes the hydrolysis of 6-phosphogluconolactone to 6-phosphogluconate. The chain is 6-phosphogluconolactonase from Salmonella gallinarum (strain 287/91 / NCTC 13346).